The chain runs to 229 residues: UPF0173 metal-dependent hydrolase SSP1060 (229 aa).

It belongs to the UPF0173 family.

This Staphylococcus saprophyticus subsp. saprophyticus (strain ATCC 15305 / DSM 20229 / NCIMB 8711 / NCTC 7292 / S-41) protein is UPF0173 metal-dependent hydrolase SSP1060.